The chain runs to 572 residues: Transcription factor E3 (572 aa).

Serine 47 bears the Phosphoserine; by MTOR mark. Positions 87-125 are enriched in low complexity; sequence TTPATLSASSSAGGSRTPAMSSSSSRVLLRQQLMRAQAQ. The disordered stretch occupies residues 87–152; sequence TTPATLSASS…SPAPASPAIS (66 aa). Residues 126-135 show a composition bias toward basic and acidic residues; that stretch reads EQERRERREQ. Asymmetric dimethylarginine is present on arginine 187. The interval 210–248 is disordered; that stretch reads LASQALTPPPGPSSAQPLPAPETAHATGPTGSAPNSPMA. The strong transcription activation domain stretch occupies residues 259-270; the sequence is EIDDVIDEIISL. Serine 320 bears the Phosphoserine; by MTOR mark. Residue lysine 338 forms a Glycyl lysine isopeptide (Lys-Gly) (interchain with G-Cter in SUMO2) linkage. The 54-residue stretch at 345-398 folds into the bHLH domain; sequence QKKDNHNLIERRRRFNINDRIKELGTLIPKSNDPEMRWNKGTILKASVDYIRKL. The short motif at 355-358 is the Nuclear localization signal element; the sequence is RRRR. The interval 408-429 is leucine-zipper; it reads LESRQRSLEQANRSLQLRIQEL. 2 disordered regions span residues 439-495 and 530-572; these read PVPP…APPS and VGGL…EEES. A compositionally biased stretch (low complexity) spans 446 to 457; it reads LLSLTTSSVSDS. Phosphoserine is present on residues serine 539, serine 545, serine 551, serine 553, serine 557, and serine 565. Residues 543-572 show a composition bias toward low complexity; the sequence is AASDPLLSSVSPAVSKASSRRSSFSMEEES.

This sequence belongs to the MiT/TFE family. In terms of assembly, homodimer and heterodimer; with TFEB or MITF. Interacts with RRAGC/RagC GDP-bound and RRAGD/RagD GDP-bound; promoting its recruitment to lysosomal membrane in the presence of nutrients. Interacts with TSC22D1; the interaction is enhanced in the presence of TGF-beta. Sumoylated; does not affect dimerization with MITF. In terms of processing, phosphorylation ar Ser-47 and Ser-320 by MTOR via non-canonical mTORC1 pathway regulates its stability and subcellular location, respectively. When nutrients are present, phosphorylation by MTOR at Ser-47 promotes ubiquitination by the SCF(BTRC) complex, followed by degradation. When nutrients are present, phosphorylation by MTOR at Ser-320 also promotes association with 14-3-3/YWHA adapters and retention in the cytosol. Phosphorylation at Ser-47 plays a more critical role than phosphorylation at Ser-320 for TFE3 inactivation. Inhibition of mTORC1, starvation and lysosomal disruption, promotes dephosphorylation and transcription factor activity. Post-translationally, ubiquitinated by the SCF(BTRC) and SCF(FBXW11) complexes following phosphorylation at Ser-47 by MTOR, leading to its degradation by the proteasome. Widely expressed.

The protein resides in the cytoplasm. It localises to the cytosol. The protein localises to the nucleus. It is found in the lysosome membrane. In terms of biological role, transcription factor that acts as a master regulator of lysosomal biogenesis and immune response. Specifically recognizes and binds E-box sequences (5'-CANNTG-3'); efficient DNA-binding requires dimerization with itself or with another MiT/TFE family member such as TFEB or MITF. Involved in the cellular response to amino acid availability by acting downstream of MTOR: in the presence of nutrients, TFE3 phosphorylation by MTOR promotes its inactivation. Upon starvation or lysosomal stress, inhibition of MTOR induces TFE3 dephosphorylation, resulting in transcription factor activity. Specifically recognizes and binds the CLEAR-box sequence (5'-GTCACGTGAC-3') present in the regulatory region of many lysosomal genes, leading to activate their expression, thereby playing a central role in expression of lysosomal genes. Maintains the pluripotent state of embryonic stem cells by promoting the expression of genes such as ESRRB; mTOR-dependent TFE3 cytosolic retention and inactivation promotes exit from pluripotency. Required to maintain the naive pluripotent state of hematopoietic stem cell; mTOR-dependent cytoplasmic retention of TFE3 promotes the exit of hematopoietic stem cell from pluripotency. TFE3 activity is also involved in the inhibition of neuronal progenitor differentiation. Acts as a positive regulator of browning of adipose tissue by promoting expression of target genes; mTOR-dependent phosphorylation promotes cytoplasmic retention of TFE3 and inhibits browning of adipose tissue. In association with TFEB, activates the expression of CD40L in T-cells, thereby playing a role in T-cell-dependent antibody responses in activated CD4(+) T-cells and thymus-dependent humoral immunity. Specifically recognizes the MUE3 box, a subset of E-boxes, present in the immunoglobulin enhancer. It also binds very well to a USF/MLTF site. Promotes TGF-beta-induced transcription of COL1A2; via its interaction with TSC22D1 at E-boxes in the gene proximal promoter. May regulate lysosomal positioning in response to nutrient deprivation by promoting the expression of PIP4P1. The protein is Transcription factor E3 of Mus musculus (Mouse).